The following is a 225-amino-acid chain: Small ribosomal subunit protein uS3 (225 aa).

The KH type-2 domain occupies 38 to 106 (LRAFLRRKLS…DVALNIVEIR (69 aa)).

The protein belongs to the universal ribosomal protein uS3 family. In terms of assembly, part of the 30S ribosomal subunit. Forms a tight complex with proteins S10 and S14.

Functionally, binds the lower part of the 30S subunit head. Binds mRNA in the 70S ribosome, positioning it for translation. This Gluconobacter oxydans (strain 621H) (Gluconobacter suboxydans) protein is Small ribosomal subunit protein uS3.